Here is a 162-residue protein sequence, read N- to C-terminus: Interleukin-15 (162 aa).

The signal sequence occupies residues 1–29; the sequence is MRISKPHLRSVSIQCYLCLLLNSHFLTEA. The propeptide occupies 30 to 48; the sequence is GIHVFILGCFSAGLPKTEA. Cystine bridges form between C83–C133 and C90–C136. The N-linked (GlcNAc...) asparagine glycan is linked to N127.

This sequence belongs to the IL-15/IL-21 family.

It is found in the secreted. In terms of biological role, cytokine that plays a major role in the development of inflammatory and protective immune responses to microbial invaders and parasites by modulating immune cells of both the innate and adaptive immune systems. Stimulates the proliferation of natural killer cells, T-cells and B-cells and promotes the secretion of several cytokines. In monocytes, induces the production of IL8 and monocyte chemotactic protein 1/CCL2, two chemokines that attract neutrophils and monocytes respectively to sites of infection. Unlike most cytokines, which are secreted in soluble form, IL15 is expressed in association with its high affinity IL15RA on the surface of IL15-producing cells and delivers signals to target cells that express IL2RB and IL2RG receptor subunits. Binding to its receptor triggers the phosphorylation of JAK1 and JAK3 and the recruitment and subsequent phosphorylation of signal transducer and activator of transcription-3/STAT3 and STAT5. In mast cells, induces the rapid tyrosine phosphorylation of STAT6 and thereby controls mast cell survival and release of cytokines such as IL4. The protein is Interleukin-15 (IL15) of Macaca thibetana (Pere David's macaque).